The chain runs to 210 residues: MRPRLWLLLAAQLAVLHGSSVLQQTPAYIKVQTNKMVMLSCEAKISLSNMRIYWLRQRQAPSSDSHHEFLALWDSAKGTIHSEEVEQEKVAVFRDASRFILNLTSVKPEDSGIYFCMIVGSPELTFGKGTQLSVVDFLPTTAQPTKKSTPKRRVCRLPRPETQKGPLCSPITLGLLVAGVLVLLVSLGVAIHLCCRRRRARLRFMKQFYK.

Residues 1–21 (MRPRLWLLLAAQLAVLHGSSV) form the signal peptide. The region spanning 22 to 132 (LQQTPAYIKV…ELTFGKGTQL (111 aa)) is the Ig-like V-type domain. Over 22–170 (LQQTPAYIKV…ETQKGPLCSP (149 aa)) the chain is Extracellular. The cysteines at positions 41 and 116 are disulfide-linked. The N-linked (GlcNAc...) asparagine glycan is linked to N102. A helical transmembrane segment spans residues 171–191 (ITLGLLVAGVLVLLVSLGVAI). The Cytoplasmic segment spans residues 192–210 (HLCCRRRRARLRFMKQFYK).

As to quaternary structure, forms disulfide-linked heterodimers with CD8A at the cell surface. Interacts with CD3D; this interaction couples TCR-CD3 with CD8. Interacts with LCK. Post-translationally, phosphorylated as a consequence of T-cell activation. In terms of processing, palmitoylated at the cytoplasmic tail and thereby targets the heterodimer CD8A/CD8B to lipid rafts unlike CD8A homodimers.

The protein localises to the cell membrane. Its function is as follows. Integral membrane glycoprotein that plays an essential role in the immune response and serves multiple functions in responses against both external and internal offenses. In T-cells, functions primarily as a coreceptor for MHC class I molecule:peptide complex. The antigens presented by class I peptides are derived from cytosolic proteins while class II derived from extracellular proteins. Interacts simultaneously with the T-cell receptor (TCR) and the MHC class I proteins presented by antigen presenting cells (APCs). In turn, recruits the Src kinase LCK to the vicinity of the TCR-CD3 complex. A palmitoylation site in the cytoplasmic tail of CD8B chain contributes to partitioning of CD8 into the plasma membrane lipid rafts where signaling proteins are enriched. Once LCK recruited, it initiates different intracellular signaling pathways by phosphorylating various substrates ultimately leading to lymphokine production, motility, adhesion and activation of cytotoxic T-lymphocytes (CTLs). Additionally, plays a critical role in thymic selection of CD8+ T-cells. This is T-cell surface glycoprotein CD8 beta chain (CD8B) from Pongo pygmaeus (Bornean orangutan).